We begin with the raw amino-acid sequence, 617 residues long: MGDPLLPGSTGLGSGGTAAATGGTGTTGTGLGSGGTSGTERPPSPARLTHTSEKHPKVTLTELNMLRRHRELCDVVLNVGGRKIFAHRVILSACSSYFCAMFTGELEESRQTEVTIRDIDENAMELLIDFCYTAHIIVEESNVQTLLPAACLLQLVEIQDICCEFLKRQLDPTNCLGIRAFADTHSCRELLRIADKFTQHNFQEVMESEEFLLLPVGQLVDIICSDELNVRSEEQVFNAVMSWLKYNVAERRQHLAQVLQHVRLPLLSPKFLVGTVGSDLLVRSDEACRDLVDEAKNYLLLPQERPLMQGPRTRPRKPTRRGEVLFAVGGWCSGDAIASVERFDPQTNDWKMVAPMSKRRCGVGVAVLNDLLYAVGGHDGQSYLNSIERYDPQTNQWSCDVAPTTSCRTSVGVAVLDGFLYAVGGQDGVQCLNHVERYDPKENKWSKVAPMTTRRLGVAVAVLSGHLYAIGGSDGQCPLNTVERYDPRQNKWVAVNPMSTRRKHLGCAVFNNYIYAVGGRDDCMELSSAERYNPLTNTWSPIVAMTSRRSGVGLAVVNGQLYAVGGFDGSAYLKTIEVYDPETNQWRLCGCMNYRRLGGGVGVMRAPQTENYMWCAK.

A disordered region spans residues 1–55 (MGDPLLPGSTGLGSGGTAAATGGTGTTGTGLGSGGTSGTERPPSPARLTHTSEKH). The segment covering 10-37 (TGLGSGGTAAATGGTGTTGTGLGSGGTS) has biased composition (gly residues). Residues 73–140 (CDVVLNVGGR…CYTAHIIVEE (68 aa)) enclose the BTB domain. The region spanning 175–277 (CLGIRAFADT…SPKFLVGTVG (103 aa)) is the BACK domain. Kelch repeat units lie at residues 324-370 (VLFA…VLND), 372-418 (LYAV…VLDG), 419-465 (FLYA…VLSG), 467-512 (LYAI…VFNN), 514-559 (IYAV…VVNG), and 560-606 (QLYA…VMRA).

It participates in protein modification; protein ubiquitination. Functionally, probable substrate-specific adapter of an E3 ubiquitin-protein ligase complex which mediates the ubiquitination and subsequent proteasomal degradation of target proteins. May have a role in synapse differentiation and growth. In Drosophila mojavensis (Fruit fly), this protein is Kelch-like protein diablo.